A 559-amino-acid polypeptide reads, in one-letter code: O-fucosyltransferase 37 (559 aa).

A helical; Signal-anchor for type II membrane protein transmembrane segment spans residues 53-73 (FFLLLISLSLVFSGISFLTFS). Asparagine 126 carries N-linked (GlcNAc...) asparagine glycosylation. Residue 331–333 (HLR) participates in substrate binding. 4 N-linked (GlcNAc...) asparagine glycosylation sites follow: asparagine 372, asparagine 403, asparagine 447, and asparagine 504.

Belongs to the glycosyltransferase GT106 family.

It localises to the membrane. The protein operates within glycan metabolism. This is O-fucosyltransferase 37 from Arabidopsis thaliana (Mouse-ear cress).